The chain runs to 458 residues: Elongation factor 1-alpha (458 aa).

Residue Gly-2 is modified to N,N,N-trimethylglycine. The residue at position 3 (Lys-3) is an N6,N6-dimethyllysine; alternate. At Lys-3 the chain carries N6-methyllysine; alternate. Residues 5-240 (KTHVNVVVIG…DAIEPPVRPT (236 aa)) enclose the tr-type G domain. Residues 14-21 (GHVDSGKS) form a G1 region. 14-21 (GHVDSGKS) contacts GTP. Lys-30 carries the N6-methyllysine modification. The interval 70–74 (GITID) is G2. Position 79 is an N6,N6,N6-trimethyllysine (Lys-79). Positions 91 to 94 (DAPG) are G3. GTP is bound by residues 91–95 (DAPGH) and 153–156 (NKMD). The interval 153-156 (NKMD) is G4. Residues 192–194 (SGW) form a G5 region. An N6,N6-dimethyllysine; alternate modification is found at Lys-316. Lys-316 is subject to N6-methyllysine; alternate. N6-methyllysine is present on Lys-390.

This sequence belongs to the TRAFAC class translation factor GTPase superfamily. Classic translation factor GTPase family. EF-Tu/EF-1A subfamily.

The protein localises to the cytoplasm. Functionally, this protein promotes the GTP-dependent binding of aminoacyl-tRNA to the A-site of ribosomes during protein biosynthesis. In Eremothecium gossypii (strain ATCC 10895 / CBS 109.51 / FGSC 9923 / NRRL Y-1056) (Yeast), this protein is Elongation factor 1-alpha (TEF).